We begin with the raw amino-acid sequence, 443 residues long: Glutamate--tRNA ligase 1 (443 aa).

A 'HIGH' region motif is present at residues 7 to 17 (PSPTGYLHVGN). The 'KMSKS' region signature appears at 236-240 (KISKR). An ATP-binding site is contributed by lysine 239.

It belongs to the class-I aminoacyl-tRNA synthetase family. Glutamate--tRNA ligase type 1 subfamily. As to quaternary structure, monomer.

The protein localises to the cytoplasm. It carries out the reaction tRNA(Glu) + L-glutamate + ATP = L-glutamyl-tRNA(Glu) + AMP + diphosphate. Functionally, catalyzes the attachment of glutamate to tRNA(Glu) in a two-step reaction: glutamate is first activated by ATP to form Glu-AMP and then transferred to the acceptor end of tRNA(Glu). The sequence is that of Glutamate--tRNA ligase 1 from Ehrlichia chaffeensis (strain ATCC CRL-10679 / Arkansas).